Reading from the N-terminus, the 373-residue chain is P2Y purinoceptor 1 (373 aa).

At 1 to 51 (MTEVPWSAVPNGTDAAFLAGLGSLWGNSTIASTAAVSSSFRCALIKTGFQF) the chain is on the extracellular side. 2 N-linked (GlcNAc...) asparagine glycosylation sites follow: Asn-11 and Asn-27. 2 disulfides stabilise this stretch: Cys-42–Cys-296 and Cys-124–Cys-202. Residue Lys-46 participates in ADP binding. Residues 52–74 (YYLPAVYILVFIIGFLGNSVAIW) traverse the membrane as a helical segment. Residues 75–87 (MFVFHMKPWSGIS) lie on the Cytoplasmic side of the membrane. The chain crosses the membrane as a helical span at residues 88–109 (VYMFNLALADFLYVLTLPALIF). The Extracellular segment spans residues 110 to 125 (YYFNKTDWIFGDVMCK). Asn-113 carries an N-linked (GlcNAc...) asparagine glycan. The helical transmembrane segment at 126-147 (LQRFIFHVNLYGSILFLTCISA) threads the bilayer. The Cytoplasmic portion of the chain corresponds to 148–166 (HRYSGVVYPLKSLGRLKKK). Residues 167–188 (NAIYVSVLVWLIVVVAISPILF) form a helical membrane-spanning segment. At 189–214 (YSGTGIRKNKTVTCYDSTSDEYLRSY) the chain is on the extracellular side. A glycan (N-linked (GlcNAc...) asparagine) is linked at Asn-197. 203-205 (YDS) serves as a coordination point for ADP. Residues 215–237 (FIYSMCTTVAMFCIPLVLILGCY) traverse the membrane as a helical segment. Residues 238–260 (GLIVRALIYKDLDNSPLRRKSIY) lie on the Cytoplasmic side of the membrane. A helical transmembrane segment spans residues 261 to 284 (LVIIVLTVFAVSYIPFHVMKTMNL). ADP contacts are provided by residues 283–287 (NLRAR), 303–306 (YATY), and Arg-310. Residues 285 to 303 (RARLDFQTPEMCDFNDRVY) are Extracellular-facing. Residues 304–325 (ATYQVTRGLASLNSCVDPILYF) traverse the membrane as a helical segment. At 326-373 (LAGDTFRRRLSRATRKASRRSEANLQSKSEEMTLNILSEFKQNGDTSL) the chain is on the cytoplasmic side.

This sequence belongs to the G-protein coupled receptor 1 family. As to expression, expressed in muscle, heart, liver, kidney, lung, brain, spleen, but not in testis.

It is found in the cell membrane. Functionally, receptor for extracellular adenine nucleotides such as ADP. In platelets, binding to ADP leads to mobilization of intracellular calcium ions via activation of phospholipase C, a change in platelet shape, and ultimately platelet aggregation. The sequence is that of P2Y purinoceptor 1 (P2ry1) from Rattus norvegicus (Rat).